The chain runs to 126 residues: MAIVSGIEIPNNKIGLIALTYIFGIGISTSKRIFKDTGIDENIKVINWSDEDINKIRKYISSNIRIEGELRFEIQLDIKRMIEIGCYRGIRHRIGLPVRGQKTKNNCRTRKGKKKTVANKKKKINK.

The disordered stretch occupies residues 101–126; the sequence is QKTKNNCRTRKGKKKTVANKKKKINK.

It belongs to the universal ribosomal protein uS13 family. In terms of assembly, part of the 30S ribosomal subunit. Forms a loose heterodimer with protein S19. Forms two bridges to the 50S subunit in the 70S ribosome.

Its function is as follows. Located at the top of the head of the 30S subunit, it contacts several helices of the 16S rRNA. In the 70S ribosome it contacts the 23S rRNA (bridge B1a) and protein L5 of the 50S subunit (bridge B1b), connecting the 2 subunits; these bridges are implicated in subunit movement. Contacts the tRNAs in the A and P-sites. The polypeptide is Small ribosomal subunit protein uS13 (Karelsulcia muelleri (strain GWSS) (Sulcia muelleri)).